We begin with the raw amino-acid sequence, 328 residues long: Coiled-coil domain-containing protein 54 (328 aa).

The stretch at 93 to 148 (KIQEKTDFFQKQMQVLETKMNVNENKQCATAEDIFSVKEDVDALKKKVTELGNQNS) forms a coiled coil. The residue at position 182 (Thr182) is a Phosphothreonine.

This Bos taurus (Bovine) protein is Coiled-coil domain-containing protein 54 (CCDC54).